We begin with the raw amino-acid sequence, 424 residues long: Arogenate dehydratase 3, chloroplastic (424 aa).

A chloroplast-targeting transit peptide spans 1 to 24 (MRTLLPSHTPATVTTAARRRHVIH). Residues 57–71 (EQSESLSSNSNGSSS) are compositionally biased toward low complexity. The interval 57–77 (EQSESLSSNSNGSSSYHVSAV) is disordered. In terms of domain architecture, Prephenate dehydratase spans 122-299 (RVAYQGVPGA…NVTRFVMLAR (178 aa)). The 92-residue stretch at 313–404 (SIVFAHEKGT…SFLRVLGSYP (92 aa)) folds into the ACT domain.

In terms of assembly, may interact with GPA1. As to expression, expressed in roots, leaves, stems, flowers and siliques.

The protein resides in the plastid. Its subcellular location is the chloroplast stroma. The catalysed reaction is L-arogenate + H(+) = L-phenylalanine + CO2 + H2O. It participates in amino-acid biosynthesis; L-phenylalanine biosynthesis; L-phenylalanine from L-arogenate: step 1/1. Functionally, converts the prephenate produced from the shikimate-chorismate pathway into phenylalanine. Together with GCR1 and GPA1, required for blue light-mediated synthesis of phenylpyruvate and subsequently of phenylalanine (Phe), in etiolated seedlings. The polypeptide is Arogenate dehydratase 3, chloroplastic (Arabidopsis thaliana (Mouse-ear cress)).